A 67-amino-acid polypeptide reads, in one-letter code: Prokaryotic ubiquitin-like protein Pup (67 aa).

Residues 1 to 11 (MAGQEQQQPQS) show a composition bias toward low complexity. Positions 1 to 47 (MAGQEQQQPQSRESEFEDDAPATPPAPGEAQASAATQGVDDLLDEID) are disordered. The tract at residues 25 to 61 (PAPGEAQASAATQGVDDLLDEIDGVLESNAEEFVRAF) is ARC ATPase binding. The residue at position 67 (Q67) is a Deamidated glutamine. Residue Q67 forms an Isoglutamyl lysine isopeptide (Gln-Lys) (interchain with K-? in acceptor proteins) linkage.

The protein belongs to the prokaryotic ubiquitin-like protein family. As to quaternary structure, strongly interacts with the proteasome-associated ATPase ARC through a hydrophobic interface; the interacting region of Pup lies in its C-terminal half. There is one Pup binding site per ARC hexamer ring. In terms of processing, is modified by deamidation of its C-terminal glutamine to glutamate by the deamidase Dop, a prerequisite to the subsequent pupylation process.

Its pathway is protein degradation; proteasomal Pup-dependent pathway. Its function is as follows. Protein modifier that is covalently attached to lysine residues of substrate proteins, thereby targeting them for proteasomal degradation. The tagging system is termed pupylation. This Arthrobacter sp. (strain FB24) protein is Prokaryotic ubiquitin-like protein Pup.